We begin with the raw amino-acid sequence, 943 residues long: Receptor-like protein 35 (943 aa).

An N-terminal signal peptide occupies residues methionine 1 to alanine 31. The Extracellular segment spans residues alanine 32 to tryptophan 897. Residues asparagine 67, asparagine 82, asparagine 118, asparagine 147, asparagine 171, asparagine 195, asparagine 219, and asparagine 222 are each glycosylated (N-linked (GlcNAc...) asparagine). LRR repeat units follow at residues leucine 124–leucine 148, histidine 150–asparagine 171, leucine 172–leucine 196, histidine 198–leucine 220, asparagine 222–leucine 244, alanine 245–asparagine 267, leucine 268–leucine 292, threonine 293–serine 317, leucine 319–isoleucine 340, proline 341–serine 364, and serine 366–phenylalanine 389. N-linked (GlcNAc...) asparagine glycans are attached at residues asparagine 291 and asparagine 312. 2 N-linked (GlcNAc...) asparagine glycosylation sites follow: asparagine 354 and asparagine 361. The LRR 12; degenerate repeat unit spans residues valine 390–histidine 414. A glycan (N-linked (GlcNAc...) asparagine) is linked at asparagine 391. LRR repeat units lie at residues leucine 415 to tyrosine 439, phenylalanine 440 to serine 463, serine 467 to glutamine 490, histidine 491 to leucine 514, proline 515 to histidine 537, lysine 544 to leucine 568, arginine 569 to leucine 592, lysine 593 to serine 617, arginine 619 to phenylalanine 639, serine 640 to lysine 665, glutamine 667 to phenylalanine 685, proline 686 to lysine 709, leucine 753 to leucine 777, lysine 778 to leucine 801, threonine 802 to leucine 825, and phenylalanine 827 to arginine 850. Asparagine 457 carries an N-linked (GlcNAc...) asparagine glycan. N-linked (GlcNAc...) asparagine glycans are attached at residues asparagine 521, asparagine 524, asparagine 556, asparagine 582, and asparagine 605. N-linked (GlcNAc...) asparagine glycosylation is present at asparagine 653. The N-linked (GlcNAc...) asparagine glycan is linked to asparagine 699. N-linked (GlcNAc...) asparagine glycosylation is found at asparagine 784 and asparagine 800. N-linked (GlcNAc...) asparagine glycosylation is found at asparagine 832, asparagine 852, and asparagine 882. A helical transmembrane segment spans residues isoleucine 898–leucine 918. The Cytoplasmic portion of the chain corresponds to valine 919–histidine 943.

It belongs to the RLP family.

It localises to the cell membrane. This Arabidopsis thaliana (Mouse-ear cress) protein is Receptor-like protein 35.